Consider the following 1185-residue polypeptide: Ubiquitin carboxyl-terminal hydrolase 36 (1185 aa).

Over residues Thr126–Asn169 the composition is skewed to polar residues. A disordered region spans residues Thr126–Pro174. In terms of domain architecture, USP spans Ala199–Asp509. The Nucleophile role is filled by Cys208. The active-site Proton acceptor is the His468. Residues Ser552 and Ser554 each carry the phosphoserine modification. The span at Ala642 to Ser658 shows a compositional bias: low complexity. Disordered regions lie at residues Ala642 to Ile804, His818 to Glu975, Ala1056 to Pro1122, and Asn1136 to Ser1185. Over residues Ser670–Val683 the composition is skewed to acidic residues. Phosphothreonine is present on Thr716. Residues Ser726 and Ser728 each carry the phosphoserine modification. Composition is skewed to low complexity over residues Lys778–Asn797 and Gln836–Ser853. Ser867 carries the phosphoserine modification. Thr870 carries the phosphothreonine modification. Position 873 is a phosphoserine (Ser873). The span at Asp891–Val920 shows a compositional bias: acidic residues. 2 stretches are compositionally biased toward polar residues: residues Thr924 to Ser942 and Ser959 to Glu975. Thr925 bears the Phosphothreonine mark. The segment covering Glu1062–Ala1071 has biased composition (basic and acidic residues). 2 stretches are compositionally biased toward low complexity: residues Gln1151–Ala1161 and Gln1172–Ser1185.

This sequence belongs to the peptidase C19 family. In terms of assembly, interacts with atms/PAF1, but not with CycT.

It is found in the nucleus. It localises to the nucleolus. It carries out the reaction Thiol-dependent hydrolysis of ester, thioester, amide, peptide and isopeptide bonds formed by the C-terminal Gly of ubiquitin (a 76-residue protein attached to proteins as an intracellular targeting signal).. Its function is as follows. Required for maintaining multiple types of adult stem cells, including male and female germline, epithelial follicle cell and intestinal stem cells. May function as a transcriptional repressor by continually deubiquiting histone H2B at the promoters of genes critical for cellular differentiation, thereby preventing histone H3 'Lys-4' trimethylation (H3K4). Controls selective autophagy activation by ubiquitinated proteins. This is Ubiquitin carboxyl-terminal hydrolase 36 (Usp36) from Drosophila mojavensis (Fruit fly).